A 445-amino-acid polypeptide reads, in one-letter code: ATP-dependent protease ATPase subunit HslU (445 aa).

ATP contacts are provided by residues Ile-17, 59-64, Asp-254, Glu-319, and Arg-391; that span reads GVGKTE.

This sequence belongs to the ClpX chaperone family. HslU subfamily. A double ring-shaped homohexamer of HslV is capped on each side by a ring-shaped HslU homohexamer. The assembly of the HslU/HslV complex is dependent on binding of ATP.

Its subcellular location is the cytoplasm. Its function is as follows. ATPase subunit of a proteasome-like degradation complex; this subunit has chaperone activity. The binding of ATP and its subsequent hydrolysis by HslU are essential for unfolding of protein substrates subsequently hydrolyzed by HslV. HslU recognizes the N-terminal part of its protein substrates and unfolds these before they are guided to HslV for hydrolysis. This chain is ATP-dependent protease ATPase subunit HslU, found in Pseudomonas fluorescens (strain Pf0-1).